We begin with the raw amino-acid sequence, 535 residues long: Ribonuclease Y (535 aa).

Residues 4–24 form a helical membrane-spanning segment; sequence IILLIVSALIGLILGYALISI. Residues 118–141 are disordered; the sequence is ENLSSKEKVLDSKEQSLTDKSKHI. The KH domain maps to 225 to 285; that stretch reads TITSVHLPDD…IRREIARMTL (61 aa). The HD domain occupies 351 to 444; it reads VLRHSVEVGK…VAAADALSSA (94 aa).

Belongs to the RNase Y family.

Its subcellular location is the cell membrane. Endoribonuclease that initiates mRNA decay. In Streptococcus pyogenes serotype M1, this protein is Ribonuclease Y.